The primary structure comprises 213 residues: Octanoyltransferase (213 aa).

Residues 35–213 (DKHGDAVLLL…ERHLPTLVGA (179 aa)) enclose the BPL/LPL catalytic domain. Residues 73–80 (RGGKITWH), 145–147 (AIG), and 158–160 (GFS) each bind substrate. Cysteine 176 functions as the Acyl-thioester intermediate in the catalytic mechanism.

This sequence belongs to the LipB family.

Its subcellular location is the cytoplasm. It catalyses the reaction octanoyl-[ACP] + L-lysyl-[protein] = N(6)-octanoyl-L-lysyl-[protein] + holo-[ACP] + H(+). It participates in protein modification; protein lipoylation via endogenous pathway; protein N(6)-(lipoyl)lysine from octanoyl-[acyl-carrier-protein]: step 1/2. Its function is as follows. Catalyzes the transfer of endogenously produced octanoic acid from octanoyl-acyl-carrier-protein onto the lipoyl domains of lipoate-dependent enzymes. Lipoyl-ACP can also act as a substrate although octanoyl-ACP is likely to be the physiological substrate. The protein is Octanoyltransferase of Salinispora arenicola (strain CNS-205).